The chain runs to 176 residues: Protein GrpE (176 aa).

The disordered stretch occupies residues 1-31 (MSEQKQEFENENAENSEHLQDENLQNIEDVE).

This sequence belongs to the GrpE family. As to quaternary structure, homodimer.

The protein resides in the cytoplasm. Its function is as follows. Participates actively in the response to hyperosmotic and heat shock by preventing the aggregation of stress-denatured proteins, in association with DnaK and GrpE. It is the nucleotide exchange factor for DnaK and may function as a thermosensor. Unfolded proteins bind initially to DnaJ; upon interaction with the DnaJ-bound protein, DnaK hydrolyzes its bound ATP, resulting in the formation of a stable complex. GrpE releases ADP from DnaK; ATP binding to DnaK triggers the release of the substrate protein, thus completing the reaction cycle. Several rounds of ATP-dependent interactions between DnaJ, DnaK and GrpE are required for fully efficient folding. The polypeptide is Protein GrpE (Campylobacter jejuni subsp. doylei (strain ATCC BAA-1458 / RM4099 / 269.97)).